A 179-amino-acid chain; its full sequence is Large ribosomal subunit protein uL5 (179 aa).

This sequence belongs to the universal ribosomal protein uL5 family. In terms of assembly, part of the 50S ribosomal subunit; part of the 5S rRNA/L5/L18/L25 subcomplex. Contacts the 5S rRNA and the P site tRNA. Forms a bridge to the 30S subunit in the 70S ribosome.

This is one of the proteins that bind and probably mediate the attachment of the 5S RNA into the large ribosomal subunit, where it forms part of the central protuberance. In the 70S ribosome it contacts protein S13 of the 30S subunit (bridge B1b), connecting the 2 subunits; this bridge is implicated in subunit movement. Contacts the P site tRNA; the 5S rRNA and some of its associated proteins might help stabilize positioning of ribosome-bound tRNAs. The protein is Large ribosomal subunit protein uL5 of Actinobacillus pleuropneumoniae serotype 5b (strain L20).